The following is a 680-amino-acid chain: DNA-directed RNA polymerase subunit beta' (680 aa).

Zn(2+) contacts are provided by C69, C71, C87, and C90. Positions 489, 491, and 493 each coordinate Mg(2+).

This sequence belongs to the RNA polymerase beta' chain family. RpoC1 subfamily. In plastids the minimal PEP RNA polymerase catalytic core is composed of four subunits: alpha, beta, beta', and beta''. When a (nuclear-encoded) sigma factor is associated with the core the holoenzyme is formed, which can initiate transcription. It depends on Mg(2+) as a cofactor. The cofactor is Zn(2+).

Its subcellular location is the plastid. The protein localises to the chloroplast. It catalyses the reaction RNA(n) + a ribonucleoside 5'-triphosphate = RNA(n+1) + diphosphate. In terms of biological role, DNA-dependent RNA polymerase catalyzes the transcription of DNA into RNA using the four ribonucleoside triphosphates as substrates. This Olimarabidopsis pumila (Dwarf rocket) protein is DNA-directed RNA polymerase subunit beta'.